The primary structure comprises 289 residues: Diaminopimelate epimerase (289 aa).

Substrate contacts are provided by N13, Q52, and N72. C81 serves as the catalytic Proton donor. Substrate-binding positions include 82–83 (GN), N167, N201, and 219–220 (ER). C228 functions as the Proton acceptor in the catalytic mechanism. 229–230 (GT) lines the substrate pocket.

Belongs to the diaminopimelate epimerase family. Homodimer.

Its subcellular location is the cytoplasm. The catalysed reaction is (2S,6S)-2,6-diaminopimelate = meso-2,6-diaminopimelate. The protein operates within amino-acid biosynthesis; L-lysine biosynthesis via DAP pathway; DL-2,6-diaminopimelate from LL-2,6-diaminopimelate: step 1/1. Functionally, catalyzes the stereoinversion of LL-2,6-diaminopimelate (L,L-DAP) to meso-diaminopimelate (meso-DAP), a precursor of L-lysine and an essential component of the bacterial peptidoglycan. This chain is Diaminopimelate epimerase, found in Caulobacter sp. (strain K31).